Consider the following 144-residue polypeptide: Heme transporter hrg1-B (144 aa).

A run of 4 helical transmembrane segments spans residues 6–26 (IYIS…AFIV), 38–58 (AMGG…IMYI), 71–91 (FFMF…ATFI), and 107–127 (FYLS…LGLY). The Di-leucine motif motif lies at 140–141 (IL).

Belongs to the HRG family.

Its subcellular location is the endosome membrane. The protein resides in the lysosome membrane. The protein localises to the cytoplasmic vesicle. It is found in the phagosome membrane. The catalysed reaction is heme b(in) = heme b(out). Heme transporter that regulates intracellular heme availability through the endosomal or lysosomal compartment. In macrophages, is the heme transporter for heme-iron recycling. Essential for macrophage iron homeostasis, transports heme from the phagolysosome to the cytoplasm during erythrophagocytosis (EP). This chain is Heme transporter hrg1-B (slc48a1a), found in Danio rerio (Zebrafish).